We begin with the raw amino-acid sequence, 371 residues long: Alanine racemase (371 aa).

Lys-40 serves as the catalytic Proton acceptor; specific for D-alanine. At Lys-40 the chain carries N6-(pyridoxal phosphate)lysine. Arg-138 lines the substrate pocket. Catalysis depends on Tyr-267, which acts as the Proton acceptor; specific for L-alanine. Met-314 is a binding site for substrate.

It belongs to the alanine racemase family. Pyridoxal 5'-phosphate serves as cofactor.

It carries out the reaction L-alanine = D-alanine. It functions in the pathway amino-acid biosynthesis; D-alanine biosynthesis; D-alanine from L-alanine: step 1/1. Functionally, catalyzes the interconversion of L-alanine and D-alanine. May also act on other amino acids. The polypeptide is Alanine racemase (alr) (Ligilactobacillus salivarius (strain UCC118) (Lactobacillus salivarius)).